The following is a 223-amino-acid chain: MCPSARSLLLLASLVLLEHLGSARNLPRSTPVPAVSQECHNLSQTLLSTVDSALQNAIEILEYYPCSAEEVNHEDITKNRTNTVKACLPQELAQNENCLASRETSFIIKRSSLTSGRTSWNTTLCFSSIYEDLKMYQLELKAISEKLLMDPKGQIYEDKALLAAVDYLMQAVNVNNETVPQTPSPEAPSSNLYRTKTKLCILLHALRIRAVTINRVMSYLNSS.

The first 23 residues, 1-23 (MCPSARSLLLLASLVLLEHLGSA), serve as a signal peptide directing secretion. N-linked (GlcNAc...) asparagine glycosylation is found at asparagine 41, asparagine 79, asparagine 121, and asparagine 176. 2 cysteine pairs are disulfide-bonded: cysteine 66–cysteine 200 and cysteine 87–cysteine 125.

It belongs to the IL-6 superfamily. In terms of assembly, heterodimer with IL12B; disulfide-linked. This heterodimer is known as interleukin IL-12. Heterodimer with EBI3/IL27B; not disulfide-linked. This heterodimer is known as interleukin IL-35. Interacts with NBR1; this interaction promotes IL-12 secretion.

The protein resides in the secreted. Functionally, heterodimerizes with IL12B to form the IL-12 cytokine or with EBI3/IL27B to form the IL-35 cytokine. IL-12 is primarily produced by professional antigen-presenting cells (APCs) such as B-cells and dendritic cells (DCs) as well as macrophages and granulocytes and regulates T-cell and natural killer-cell responses, induces the production of interferon-gamma (IFN-gamma), favors the differentiation of T-helper 1 (Th1) cells and is an important link between innate resistance and adaptive immunity. Mechanistically, exerts its biological effects through a receptor composed of IL12R1 and IL12R2 subunits. Binding to the receptor results in the rapid tyrosine phosphorylation of a number of cellular substrates including the JAK family kinases TYK2 and JAK2. In turn, recruited STAT4 gets phosphorylated and translocates to the nucleus where it regulates cytokine/growth factor responsive genes. As part of IL-35, plays essential roles in maintaining the immune homeostasis of the liver microenvironment and also functions as an immune-suppressive cytokine. Mediates biological events through unconventional receptors composed of IL12RB2 and gp130/IL6ST heterodimers or homodimers. Signaling requires the transcription factors STAT1 and STAT4, which form a unique heterodimer that binds to distinct DNA sites. This is Interleukin-12 subunit alpha (IL12A) from Marmota monax (Woodchuck).